We begin with the raw amino-acid sequence, 160 residues long: Protein Bel-3 (160 aa).

Homodimer.

The protein localises to the host cytoplasm. This Human spumaretrovirus (SFVcpz(hu)) protein is Protein Bel-3 (bel3).